A 409-amino-acid chain; its full sequence is Elongation factor Tu, chloroplastic (409 aa).

The tr-type G domain maps to 10–214 (KPHVNIGTIG…AVDEYIPTPE (205 aa)). The tract at residues 19-26 (GHVDHGKT) is G1. Residue 19 to 26 (GHVDHGKT) coordinates GTP. T26 contributes to the Mg(2+) binding site. The G2 stretch occupies residues 60–64 (GITIN). Residues 81-84 (DCPG) form a G3 region. Residues 81–85 (DCPGH) and 136–139 (NKED) each bind GTP. The segment at 136–139 (NKED) is G4. Positions 174–176 (SAL) are G5.

This sequence belongs to the TRAFAC class translation factor GTPase superfamily. Classic translation factor GTPase family. EF-Tu/EF-1A subfamily.

It localises to the plastid. Its subcellular location is the chloroplast. The catalysed reaction is GTP + H2O = GDP + phosphate + H(+). In terms of biological role, GTP hydrolase that promotes the GTP-dependent binding of aminoacyl-tRNA to the A-site of ribosomes during protein biosynthesis. This Phaeodactylum tricornutum (strain CCAP 1055/1) protein is Elongation factor Tu, chloroplastic (tufA).